Consider the following 417-residue polypeptide: Spermidine/putrescine import ATP-binding protein PotA (417 aa).

Residues 5–308 (IILKDLTKVF…PANRFVAQFV (304 aa)) form the ABC transporter domain. 37 to 44 (GPSGCGKT) is a binding site for ATP. Residues 105 to 177 (DFNSKIKDNL…TALKCKKINK (73 aa)) are insert.

This sequence belongs to the ABC transporter superfamily. Spermidine/putrescine importer (TC 3.A.1.11.1) family. As to quaternary structure, the complex is composed of two ATP-binding proteins (PotA), two transmembrane proteins (PotB and PotC) and a solute-binding protein (PotD).

The protein resides in the cell membrane. The enzyme catalyses ATP + H2O + polyamine-[polyamine-binding protein]Side 1 = ADP + phosphate + polyamineSide 2 + [polyamine-binding protein]Side 1.. Its function is as follows. Part of the ABC transporter complex PotABCD involved in spermidine/putrescine import. Responsible for energy coupling to the transport system. The protein is Spermidine/putrescine import ATP-binding protein PotA of Aster yellows witches'-broom phytoplasma (strain AYWB).